Consider the following 180-residue polypeptide: Large ribosomal subunit protein uL5 (180 aa).

Belongs to the universal ribosomal protein uL5 family. As to quaternary structure, part of the 50S ribosomal subunit; part of the 5S rRNA/L5/L18/L25 subcomplex. Contacts the 5S rRNA and the P site tRNA. Forms a bridge to the 30S subunit in the 70S ribosome.

Its function is as follows. This is one of the proteins that bind and probably mediate the attachment of the 5S RNA into the large ribosomal subunit, where it forms part of the central protuberance. In the 70S ribosome it contacts protein S13 of the 30S subunit (bridge B1b), connecting the 2 subunits; this bridge is implicated in subunit movement. Contacts the P site tRNA; the 5S rRNA and some of its associated proteins might help stabilize positioning of ribosome-bound tRNAs. The polypeptide is Large ribosomal subunit protein uL5 (Chlamydia abortus (strain DSM 27085 / S26/3) (Chlamydophila abortus)).